Consider the following 120-residue polypeptide: Succinate dehydrogenase membrane anchor subunit (120 aa).

Residues 1–17 (MTEKLLHFIRTKSGSMH) lie on the Mitochondrial matrix side of the membrane. Residues 18–38 (WWLQRFLAILLAPIILYLLFD) form a helical membrane-spanning segment. The Mitochondrial intermembrane portion of the chain corresponds to 39–63 (VAIYIGQQSDPTVMMFLNRIFNHNS). The chain crosses the membrane as a helical span at residues 64 to 85 (IFIFITSVILIWHVRGGMEVII). Heme is bound at residue H76. The Mitochondrial matrix portion of the chain corresponds to 86–95 (EDYVHGEKTR). Y88 is a binding site for a ubiquinone. Residues 96–120 (IVSIFLIRVIAIEIMEYLYKCSIIF) form a helical membrane-spanning segment.

In terms of assembly, part of an enzyme complex containing four subunits: a flavoprotein, an iron-sulfur protein, plus two membrane-anchoring proteins. Heme is required as a cofactor.

It is found in the mitochondrion inner membrane. It functions in the pathway carbohydrate metabolism; tricarboxylic acid cycle. Functionally, membrane-anchoring subunit of succinate dehydrogenase (SDH). In Reclinomonas americana, this protein is Succinate dehydrogenase membrane anchor subunit (SDH4).